The following is a 251-amino-acid chain: SNAP25 homologous protein SNAP29 (251 aa).

The segment at 1-52 (MAPKNSSWNPFDDEKEAAKSFSLNPFDDDDDDKEVEKRFTSSLKPSGGKENQ) is disordered. Residues 40 to 52 (TSSLKPSGGKENQ) show a composition bias toward polar residues. Positions 186-248 (KTQIAKQDEA…KQSNQRARYL (63 aa)) constitute a t-SNARE coiled-coil homology domain.

It belongs to the SNAP-25 family.

It is found in the membrane. Its subcellular location is the cytoplasm. Functionally, SNAREs, soluble N-ethylmaleimide-sensitive factor-attachment protein receptors, are essential proteins for fusion of cellular membranes. SNAREs localized on opposing membranes assemble to form a trans-SNARE complex, an extended, parallel four alpha-helical bundle that drives membrane fusion. This is SNAP25 homologous protein SNAP29 (SNAP29) from Arabidopsis thaliana (Mouse-ear cress).